Here is a 163-residue protein sequence, read N- to C-terminus: Phosphopantetheine adenylyltransferase (163 aa).

Substrate is bound at residue S11. ATP contacts are provided by residues 11–12 (SF) and H19. K43, L75, and R89 together coordinate substrate. Residues 90–92 (GLR), E100, and 125–131 (YSFLSSS) each bind ATP.

This sequence belongs to the bacterial CoaD family. In terms of assembly, homohexamer. Mg(2+) serves as cofactor.

It is found in the cytoplasm. It carries out the reaction (R)-4'-phosphopantetheine + ATP + H(+) = 3'-dephospho-CoA + diphosphate. It participates in cofactor biosynthesis; coenzyme A biosynthesis; CoA from (R)-pantothenate: step 4/5. Reversibly transfers an adenylyl group from ATP to 4'-phosphopantetheine, yielding dephospho-CoA (dPCoA) and pyrophosphate. The protein is Phosphopantetheine adenylyltransferase of Lysinibacillus sphaericus (strain C3-41).